The following is a 113-amino-acid chain: Small ribosomal subunit protein uS17 (113 aa).

Belongs to the universal ribosomal protein uS17 family. Part of the 30S ribosomal subunit.

One of the primary rRNA binding proteins, it binds specifically to the 5'-end of 16S ribosomal RNA. This is Small ribosomal subunit protein uS17 from Pyrococcus abyssi (strain GE5 / Orsay).